A 284-amino-acid polypeptide reads, in one-letter code: Zinc finger protein ZAT3 (284 aa).

Residues 1–12 (MNNNHSYDDRSF) show a composition bias toward basic and acidic residues. A disordered region spans residues 1 to 76 (MNNNHSYDDR…KPDPNAPKIT (76 aa)). The segment covering 18 to 37 (PSNTSNPNPNLQFALSSSYD) has biased composition (polar residues). Positions 47–62 (TVASSSSSSPKSASKP) are enriched in low complexity. 3 consecutive C2H2-type zinc fingers follow at residues 77–99 (RPCT…MRCH), 162–184 (FECG…RASH), and 222–244 (HKCN…MRCH).

Interacts (via the EAR motif) with TPL. In terms of tissue distribution, expressed exclusively in pollen.

The protein resides in the nucleus. Mediates the regulation of male germ cell division by DUO1. The chain is Zinc finger protein ZAT3 from Arabidopsis thaliana (Mouse-ear cress).